Consider the following 294-residue polypeptide: Holothin acyltransferase (294 aa).

In terms of domain architecture, N-acetyltransferase spans 17 to 146; it reads WTSKPASLEE…SRLVGIHNQQ (130 aa).

It catalyses the reaction marinoloyl-CoA C + holothin = thiomarinol C + CoA. The enzyme catalyses pseudomonoyl-CoA C + holothin = pseudomonic acid C--holothin + CoA. The protein operates within antibiotic biosynthesis. Acyltransferase that catalyzes the formation of pseudomonic acid C-holothin (PAC-holothin), a thiomarinol analog, from pseudomonoyl-CoA C (PAC-CoA) and holothin. Accepts linear CoA substrates of different lengths, including propionyl-, hexanoyl-, octanoyl-, oleoyl- and dodecanoyl-CoA, readily converting all into the corresponding acyl-holothin adducts. In vivo, is probably involved in the biosynthesis of thiomarinol, a naturally occurring double-headed antibiotic. The protein is Holothin acyltransferase of Pseudoalteromonas sp. (strain SANK 73390).